Consider the following 475-residue polypeptide: UDP-N-acetylmuramoylalanine--D-glutamate ligase (475 aa).

130 to 136 is a binding site for ATP; the sequence is GTNGKTT.

Belongs to the MurCDEF family.

The protein localises to the cytoplasm. It catalyses the reaction UDP-N-acetyl-alpha-D-muramoyl-L-alanine + D-glutamate + ATP = UDP-N-acetyl-alpha-D-muramoyl-L-alanyl-D-glutamate + ADP + phosphate + H(+). The protein operates within cell wall biogenesis; peptidoglycan biosynthesis. In terms of biological role, cell wall formation. Catalyzes the addition of glutamate to the nucleotide precursor UDP-N-acetylmuramoyl-L-alanine (UMA). This chain is UDP-N-acetylmuramoylalanine--D-glutamate ligase, found in Corynebacterium efficiens (strain DSM 44549 / YS-314 / AJ 12310 / JCM 11189 / NBRC 100395).